A 276-amino-acid polypeptide reads, in one-letter code: Undecaprenyl-diphosphatase (276 aa).

6 helical membrane passes run 43 to 63, 85 to 105, 109 to 129, 184 to 204, 218 to 238, and 254 to 274; these read RAMA…VWEF, INLL…ADLI, LFNP…MLWA, ATEF…VYSG, VFAI…KGLL, and IAFG…WTAA.

It belongs to the UppP family.

The protein resides in the cell inner membrane. It carries out the reaction di-trans,octa-cis-undecaprenyl diphosphate + H2O = di-trans,octa-cis-undecaprenyl phosphate + phosphate + H(+). Its function is as follows. Catalyzes the dephosphorylation of undecaprenyl diphosphate (UPP). Confers resistance to bacitracin. This is Undecaprenyl-diphosphatase from Pseudomonas fluorescens (strain ATCC BAA-477 / NRRL B-23932 / Pf-5).